Consider the following 152-residue polypeptide: Transcriptional regulator MraZ (152 aa).

2 consecutive SpoVT-AbrB domains span residues 5–52 (ASAI…PIHE) and 81–124 (AHEV…DEQA).

The protein belongs to the MraZ family. As to quaternary structure, forms oligomers.

It is found in the cytoplasm. It localises to the nucleoid. This Shewanella putrefaciens (strain CN-32 / ATCC BAA-453) protein is Transcriptional regulator MraZ.